A 370-amino-acid chain; its full sequence is Aminomethyltransferase (370 aa).

The protein belongs to the GcvT family. As to quaternary structure, the glycine cleavage system is composed of four proteins: P, T, L and H.

The catalysed reaction is N(6)-[(R)-S(8)-aminomethyldihydrolipoyl]-L-lysyl-[protein] + (6S)-5,6,7,8-tetrahydrofolate = N(6)-[(R)-dihydrolipoyl]-L-lysyl-[protein] + (6R)-5,10-methylene-5,6,7,8-tetrahydrofolate + NH4(+). Its function is as follows. The glycine cleavage system catalyzes the degradation of glycine. In Clostridium botulinum (strain Loch Maree / Type A3), this protein is Aminomethyltransferase.